We begin with the raw amino-acid sequence, 148 residues long: Large ribosomal subunit protein uL15 (148 aa).

Residues 1–50 (MNLSNLKPAEGSTKTRKRIGRGPGSGLGGTSTRGHKGAKSRSGYSKKIGF) are disordered. A compositionally biased stretch (gly residues) spans 21–31 (RGPGSGLGGTS).

Belongs to the universal ribosomal protein uL15 family. In terms of assembly, part of the 50S ribosomal subunit.

Its function is as follows. Binds to the 23S rRNA. This Bacteroides fragilis (strain ATCC 25285 / DSM 2151 / CCUG 4856 / JCM 11019 / LMG 10263 / NCTC 9343 / Onslow / VPI 2553 / EN-2) protein is Large ribosomal subunit protein uL15.